A 470-amino-acid chain; its full sequence is tRNA-2-methylthio-N(6)-dimethylallyladenosine synthase (470 aa).

In terms of domain architecture, MTTase N-terminal spans 1–116 (MTYTVRTYGC…LPALLRRSRH (116 aa)). Cys10, Cys45, Cys79, Cys153, Cys157, and Cys160 together coordinate [4Fe-4S] cluster. In terms of domain architecture, Radical SAM core spans 139-369 (RESNYSAWVS…LDLQNRIALE (231 aa)). A TRAM domain is found at 372–439 (RKLIGKEVEL…PYHLIGDNAL (68 aa)).

Belongs to the methylthiotransferase family. MiaB subfamily. Monomer. [4Fe-4S] cluster serves as cofactor.

The protein localises to the cytoplasm. The catalysed reaction is N(6)-dimethylallyladenosine(37) in tRNA + (sulfur carrier)-SH + AH2 + 2 S-adenosyl-L-methionine = 2-methylsulfanyl-N(6)-dimethylallyladenosine(37) in tRNA + (sulfur carrier)-H + 5'-deoxyadenosine + L-methionine + A + S-adenosyl-L-homocysteine + 2 H(+). In terms of biological role, catalyzes the methylthiolation of N6-(dimethylallyl)adenosine (i(6)A), leading to the formation of 2-methylthio-N6-(dimethylallyl)adenosine (ms(2)i(6)A) at position 37 in tRNAs that read codons beginning with uridine. The sequence is that of tRNA-2-methylthio-N(6)-dimethylallyladenosine synthase from Tropheryma whipplei (strain Twist) (Whipple's bacillus).